The following is an 800-amino-acid chain: DNA topoisomerase 4 subunit A (800 aa).

Residues 31–495 (LPDVRDGLKP…EIEEIKIDKE (465 aa)) form the Topo IIA-type catalytic domain. Catalysis depends on tyrosine 119, which acts as the O-(5'-phospho-DNA)-tyrosine intermediate.

Belongs to the type II topoisomerase GyrA/ParC subunit family. ParC type 2 subfamily. As to quaternary structure, heterotetramer composed of ParC and ParE.

It is found in the cell membrane. It catalyses the reaction ATP-dependent breakage, passage and rejoining of double-stranded DNA.. Its function is as follows. Topoisomerase IV is essential for chromosome segregation. It relaxes supercoiled DNA. Performs the decatenation events required during the replication of a circular DNA molecule. This is DNA topoisomerase 4 subunit A from Staphylococcus aureus (strain Mu50 / ATCC 700699).